The following is a 99-amino-acid chain: Aspartyl/glutamyl-tRNA(Asn/Gln) amidotransferase subunit C (99 aa).

The protein belongs to the GatC family. As to quaternary structure, heterotrimer of A, B and C subunits.

The enzyme catalyses L-glutamyl-tRNA(Gln) + L-glutamine + ATP + H2O = L-glutaminyl-tRNA(Gln) + L-glutamate + ADP + phosphate + H(+). It catalyses the reaction L-aspartyl-tRNA(Asn) + L-glutamine + ATP + H2O = L-asparaginyl-tRNA(Asn) + L-glutamate + ADP + phosphate + 2 H(+). In terms of biological role, allows the formation of correctly charged Asn-tRNA(Asn) or Gln-tRNA(Gln) through the transamidation of misacylated Asp-tRNA(Asn) or Glu-tRNA(Gln) in organisms which lack either or both of asparaginyl-tRNA or glutaminyl-tRNA synthetases. The reaction takes place in the presence of glutamine and ATP through an activated phospho-Asp-tRNA(Asn) or phospho-Glu-tRNA(Gln). The chain is Aspartyl/glutamyl-tRNA(Asn/Gln) amidotransferase subunit C from Mycolicibacterium smegmatis (strain ATCC 700084 / mc(2)155) (Mycobacterium smegmatis).